Consider the following 113-residue polypeptide: MARLNRHPQSNIAYAVRSLRSKGQLITNSAPTQNASTDALAVNIDHRAILTVPSYRSSVRVFQRSPCLHRAEGLLSPYCNRGSERTNQGNRGSAPSKILLPRTIADPFRGGPE.

The tract at residues 78–113 is disordered; sequence YCNRGSERTNQGNRGSAPSKILLPRTIADPFRGGPE.

This is an uncharacterized protein from Halobacterium phage phiH (Bacteriophage phi-H).